A 397-amino-acid polypeptide reads, in one-letter code: Phosphoglycerate kinase (397 aa).

Substrate-binding positions include 25–27, Arg41, 64–67, Arg118, and Arg151; these read DLN and HLGR. ATP contacts are provided by residues Lys202, Glu324, and 350–353; that span reads GGDT.

This sequence belongs to the phosphoglycerate kinase family. Monomer.

The protein resides in the cytoplasm. The catalysed reaction is (2R)-3-phosphoglycerate + ATP = (2R)-3-phospho-glyceroyl phosphate + ADP. It participates in carbohydrate degradation; glycolysis; pyruvate from D-glyceraldehyde 3-phosphate: step 2/5. This Janthinobacterium sp. (strain Marseille) (Minibacterium massiliensis) protein is Phosphoglycerate kinase.